A 247-amino-acid chain; its full sequence is tRNA uridine(34) hydroxylase (247 aa).

Positions 124–218 (TKQDVIVIDT…YLEDTQNKNN (95 aa)) constitute a Rhodanese domain. The Cysteine persulfide intermediate role is filled by Cys178.

Belongs to the TrhO family.

The catalysed reaction is uridine(34) in tRNA + AH2 + O2 = 5-hydroxyuridine(34) in tRNA + A + H2O. Functionally, catalyzes oxygen-dependent 5-hydroxyuridine (ho5U) modification at position 34 in tRNAs. The protein is tRNA uridine(34) hydroxylase of Rickettsia massiliae (strain Mtu5).